The following is a 281-amino-acid chain: MAFSDLTSRTVRLYDNWIKDADPRVEDWLLMSSPLPQTIILGFYVYFVTSLGPKLMENRKPFELKKVMITYNFSIVLFSVYMFYEFIMSGWGTGYSFRCDIVDYSQSPTALRMVRTCWLYYFSKFIELLDTIFFILRKKNSQVTFLHVFHHTIMPWTWWFGVKFAAGGLGTFHAFLNTAVHVVMYSYYGLCALGPDYQKYLWWKKYLTSLQLIQFVLITIHISQFFFMEDCKYQFPVFQYIIMSYGCIFLLLFLHFWYRAYTKGQRLPKTVKHGICKNKDH.

The residue at position 2 (A2) is an N-acetylalanine. Residues 2–27 (AFSDLTSRTVRLYDNWIKDADPRVED) lie on the Lumenal side of the membrane. Residues 28 to 48 (WLLMSSPLPQTIILGFYVYFV) form a helical membrane-spanning segment. Residues 49-66 (TSLGPKLMENRKPFELKK) are Cytoplasmic-facing. Residues 67 to 87 (VMITYNFSIVLFSVYMFYEFI) form a helical membrane-spanning segment. Residues 88-115 (MSGWGTGYSFRCDIVDYSQSPTALRMVR) are Lumenal-facing. An intrachain disulfide couples C99 to C231. Residues 116–136 (TCWLYYFSKFIELLDTIFFIL) form a helical membrane-spanning segment. 5 residues coordinate 3-oxoeicosanoyl-CoA: K124, R137, K139, Q142, and H147. Over 137 to 142 (RKKNSQ) the chain is Cytoplasmic. Residues 143-162 (VTFLHVFHHTIMPWTWWFGV) traverse the membrane as a helical segment. Positions 147–151 (HVFHH) match the HxxHH motif motif. H150 (nucleophile) is an active-site residue. Residues 163–171 (KFAAGGLGT) are Lumenal-facing. Residues 172–194 (FHAFLNTAVHVVMYSYYGLCALG) traverse the membrane as a helical segment. 3-oxoeicosanoyl-CoA is bound by residues Y187, K204, T208, and Q211. The Cytoplasmic portion of the chain corresponds to 195–206 (PDYQKYLWWKKY). A helical transmembrane segment spans residues 207-227 (LTSLQLIQFVLITIHISQFFF). At 228–236 (MEDCKYQFP) the chain is on the lumenal side. A helical transmembrane segment spans residues 237-257 (VFQYIIMSYGCIFLLLFLHFW). Topologically, residues 258 to 281 (YRAYTKGQRLPKTVKHGICKNKDH) are cytoplasmic. 3-oxoeicosanoyl-CoA is bound at residue R266. Positions 277 to 281 (KNKDH) match the Di-lysine motif motif.

It belongs to the ELO family. ELOVL7 subfamily. As to quaternary structure, homodimer. Interacts with TECR.

The protein resides in the endoplasmic reticulum membrane. The catalysed reaction is a very-long-chain acyl-CoA + malonyl-CoA + H(+) = a very-long-chain 3-oxoacyl-CoA + CO2 + CoA. It carries out the reaction eicosanoyl-CoA + malonyl-CoA + H(+) = 3-oxodocosanoyl-CoA + CO2 + CoA. It catalyses the reaction (5Z,8Z,11Z,14Z)-eicosatetraenoyl-CoA + malonyl-CoA + H(+) = (7Z,10Z,13Z,16Z)-3-oxodocosatetraenoyl-CoA + CO2 + CoA. The enzyme catalyses (6Z,9Z,12Z)-octadecatrienoyl-CoA + malonyl-CoA + H(+) = (8Z,11Z,14Z)-3-oxoeicosatrienoyl-CoA + CO2 + CoA. The catalysed reaction is (9Z,12Z)-octadecadienoyl-CoA + malonyl-CoA + H(+) = (11Z,14Z)-3-oxoicosa-11,14-dienoyl-CoA + CO2 + CoA. It carries out the reaction (9Z)-octadecenoyl-CoA + malonyl-CoA + H(+) = 3-oxo-(11Z)-eicosenoyl-CoA + CO2 + CoA. It catalyses the reaction octadecanoyl-CoA + malonyl-CoA + H(+) = 3-oxoeicosanoyl-CoA + CO2 + CoA. The enzyme catalyses hexadecanoyl-CoA + malonyl-CoA + H(+) = 3-oxooctadecanoyl-CoA + CO2 + CoA. The catalysed reaction is (9Z,12Z,15Z)-octadecatrienoyl-CoA + malonyl-CoA + H(+) = (11Z,14Z,17Z)-3-oxoeicosatrienoyl-CoA + CO2 + CoA. The protein operates within lipid metabolism; fatty acid biosynthesis. Its function is as follows. Catalyzes the first and rate-limiting reaction of the four reactions that constitute the long-chain fatty acids elongation cycle. This endoplasmic reticulum-bound enzymatic process allows the addition of 2 carbons to the chain of long- and very long-chain fatty acids (VLCFAs) per cycle. Condensing enzyme with higher activity toward C18 acyl-CoAs, especially C18:3(n-3) acyl-CoAs and C18:3(n-6)-CoAs. Also active toward C20:4-, C18:0-, C18:1-, C18:2- and C16:0-CoAs, and weakly toward C20:0-CoA. Little or no activity toward C22:0-, C24:0-, or C26:0-CoAs. May participate in the production of saturated and polyunsaturated VLCFAs of different chain lengths that are involved in multiple biological processes as precursors of membrane lipids and lipid mediators. In Bos taurus (Bovine), this protein is Very long chain fatty acid elongase 7.